Here is a 164-residue protein sequence, read N- to C-terminus: Vesiculogenesis and immune response regulator (164 aa).

Post-translationally, could be O-mannosylated. Is likely mannosylated on Thr-61 when overexpressed in M.smegmatis.

The protein resides in the cell inner membrane. It localises to the cytoplasm. Its function is as follows. Virulence factor that regulates vesiculogenesis. Acts by regulating the production of mycobacterial membrane vesicles (MV) bearing Toll-like receptor 2 (TLR2) ligands, including the lipoproteins LpqH, a major host TLR2 agonist, and SodC. By restraining the release of most of the material that activates host cells through TLR2, VirR reduces the immunostimulant potential of M.tuberculosis and increases its virulence. May contribute to cell envelope integrity. When overexpressed in M.smegmatis, it modulates the production of IL-10, IL-12 p40 and TNF-alpha by RAW264.7 macrophages and it decreases the killing of M.smegmatis. This is Vesiculogenesis and immune response regulator from Mycobacterium tuberculosis (strain ATCC 25618 / H37Rv).